The sequence spans 340 residues: Anthranilate phosphoribosyltransferase (340 aa).

5-phospho-alpha-D-ribose 1-diphosphate is bound by residues G81, 84-85, T89, 91-94, 109-117, and S121; these read GD, NIST, and KHGNRGATS. G81 serves as a coordination point for anthranilate. Position 93 (S93) interacts with Mg(2+). Residue N112 participates in anthranilate binding. Anthranilate is bound at residue R167. Mg(2+) contacts are provided by D225 and E226.

It belongs to the anthranilate phosphoribosyltransferase family. Homodimer. Mg(2+) is required as a cofactor.

The enzyme catalyses N-(5-phospho-beta-D-ribosyl)anthranilate + diphosphate = 5-phospho-alpha-D-ribose 1-diphosphate + anthranilate. It participates in amino-acid biosynthesis; L-tryptophan biosynthesis; L-tryptophan from chorismate: step 2/5. In terms of biological role, catalyzes the transfer of the phosphoribosyl group of 5-phosphorylribose-1-pyrophosphate (PRPP) to anthranilate to yield N-(5'-phosphoribosyl)-anthranilate (PRA). The protein is Anthranilate phosphoribosyltransferase of Methanocorpusculum labreanum (strain ATCC 43576 / DSM 4855 / Z).